The following is a 471-amino-acid chain: (13S,14R)-1,13-dihydroxy-N-methylcanadine 13-O-acetyltransferase AT1 (471 aa).

Belongs to the plant acyltransferase family.

The catalysed reaction is (13S,14R)-1,13-dihydroxy-N-methylcanadine + acetyl-CoA = (13S,14R)-13-O-acetyl-1-hydroxy-N-methylcanadine + CoA. It participates in alkaloid biosynthesis. Acetyltransferase involved in the biosynthesis of the benzylisoquinoline alkaloid noscapine. Converts (13S,14R)-1,13-dihydroxy-N-methylcanadine to (13S,14R)-13-O-acetyl-1-hydroxy-N-methylcanadine. The sequence is that of (13S,14R)-1,13-dihydroxy-N-methylcanadine 13-O-acetyltransferase AT1 from Papaver somniferum (Opium poppy).